We begin with the raw amino-acid sequence, 128 residues long: Large ribosomal subunit protein uL22 (128 aa).

It belongs to the universal ribosomal protein uL22 family. Part of the 50S ribosomal subunit.

Functionally, this protein binds specifically to 23S rRNA; its binding is stimulated by other ribosomal proteins, e.g. L4, L17, and L20. It is important during the early stages of 50S assembly. It makes multiple contacts with different domains of the 23S rRNA in the assembled 50S subunit and ribosome. The globular domain of the protein is located near the polypeptide exit tunnel on the outside of the subunit, while an extended beta-hairpin is found that lines the wall of the exit tunnel in the center of the 70S ribosome. This is Large ribosomal subunit protein uL22 from Methylocella silvestris (strain DSM 15510 / CIP 108128 / LMG 27833 / NCIMB 13906 / BL2).